The primary structure comprises 354 residues: 2-methylisoborneol synthase (354 aa).

The segment at 1-29 is disordered; it reads MIELIGHETPVPSQQQHTGGVRGTSACTP. Residues D113, D114, E118, N264, S268, and E272 each contribute to the Mg(2+) site.

This sequence belongs to the terpene synthase family. 2-methylisoborneol synthase subfamily. It depends on Mg(2+) as a cofactor.

The enzyme catalyses (E)-2-methylgeranyl diphosphate + H2O = 2-methylisoborneol + diphosphate. Its function is as follows. Catalyzes the cyclization of 2-methylgeranyl diphosphate (2-MeGPP) to 2-methylisoborneol (2-MIB), which likely involves the intermediacy of 2-methyllinalyl diphosphate. The sequence is that of 2-methylisoborneol synthase from Saccharopolyspora erythraea (strain ATCC 11635 / DSM 40517 / JCM 4748 / NBRC 13426 / NCIMB 8594 / NRRL 2338).